A 234-amino-acid chain; its full sequence is 2-C-methyl-D-erythritol 4-phosphate cytidylyltransferase (234 aa).

This sequence belongs to the IspD/TarI cytidylyltransferase family. IspD subfamily.

It catalyses the reaction 2-C-methyl-D-erythritol 4-phosphate + CTP + H(+) = 4-CDP-2-C-methyl-D-erythritol + diphosphate. It functions in the pathway isoprenoid biosynthesis; isopentenyl diphosphate biosynthesis via DXP pathway; isopentenyl diphosphate from 1-deoxy-D-xylulose 5-phosphate: step 2/6. Its function is as follows. Catalyzes the formation of 4-diphosphocytidyl-2-C-methyl-D-erythritol from CTP and 2-C-methyl-D-erythritol 4-phosphate (MEP). This chain is 2-C-methyl-D-erythritol 4-phosphate cytidylyltransferase, found in Desulforamulus reducens (strain ATCC BAA-1160 / DSM 100696 / MI-1) (Desulfotomaculum reducens).